The chain runs to 83 residues: MSVKIRLKRMGAKKKPFYRIVVADSRCPRDGKFIEEIGYYNPLVEEKTVKVDSEKVQQWIKNGAKPTDTVDRLFKNNGVYEAK.

Belongs to the bacterial ribosomal protein bS16 family.

This Finegoldia magna (strain ATCC 29328 / DSM 20472 / WAL 2508) (Peptostreptococcus magnus) protein is Small ribosomal subunit protein bS16.